The following is a 118-amino-acid chain: NADH-quinone oxidoreductase subunit A 2 (118 aa).

Transmembrane regions (helical) follow at residues 5–25 (YLPI…SLVF), 60–80 (FYII…LYPW), and 87–107 (LGMF…VGYI).

Belongs to the complex I subunit 3 family. NDH-1 is composed of 14 different subunits. Subunits NuoA, H, J, K, L, M, N constitute the membrane sector of the complex.

The protein localises to the cell inner membrane. The catalysed reaction is a quinone + NADH + 5 H(+)(in) = a quinol + NAD(+) + 4 H(+)(out). Its function is as follows. NDH-1 shuttles electrons from NADH, via FMN and iron-sulfur (Fe-S) centers, to quinones in the respiratory chain. The immediate electron acceptor for the enzyme in this species is believed to be ubiquinone. Couples the redox reaction to proton translocation (for every two electrons transferred, four hydrogen ions are translocated across the cytoplasmic membrane), and thus conserves the redox energy in a proton gradient. The sequence is that of NADH-quinone oxidoreductase subunit A 2 from Geobacter metallireducens (strain ATCC 53774 / DSM 7210 / GS-15).